We begin with the raw amino-acid sequence, 322 residues long: Glycerol-3-phosphate dehydrogenase [NAD(P)+] (322 aa).

W13, H33, and K99 together coordinate NADPH. K99, G127, and S129 together coordinate sn-glycerol 3-phosphate. An NADPH-binding site is contributed by A131. The sn-glycerol 3-phosphate site is built by K182, D235, S245, R246, and N247. The active-site Proton acceptor is the K182. R246 is a binding site for NADPH. E272 provides a ligand contact to NADPH.

This sequence belongs to the NAD-dependent glycerol-3-phosphate dehydrogenase family.

It localises to the cytoplasm. It carries out the reaction sn-glycerol 3-phosphate + NAD(+) = dihydroxyacetone phosphate + NADH + H(+). It catalyses the reaction sn-glycerol 3-phosphate + NADP(+) = dihydroxyacetone phosphate + NADPH + H(+). It functions in the pathway membrane lipid metabolism; glycerophospholipid metabolism. Its function is as follows. Catalyzes the reduction of the glycolytic intermediate dihydroxyacetone phosphate (DHAP) to sn-glycerol 3-phosphate (G3P), the key precursor for phospholipid synthesis. This Ruthia magnifica subsp. Calyptogena magnifica protein is Glycerol-3-phosphate dehydrogenase [NAD(P)+].